The primary structure comprises 469 residues: MDASLEKIADPTLAEMGKNLKEAVKMLEDSQRRTEEENGKKLISRDIPGPLQGSGQDMVSILQLVQNLMHGDEDEEPQSPRIQNIGEQGHVAVLGHSLGAYILTLDEEKLRKLTTRILSDTTLWLCRIFRYENGCAYFHEEEREGLAKICRLAIHSQYEDFVVDGFSGLYNKKPVIYLSAAARPGLGQYLCNQLGLPFPCLCRVPCNTMFGSQHQMDVAFLEKLIKDDIERGRLPLLLVANAGTAAVGHTDKIGRLKELCEQYGIWLHVEGVNLATLALGYVSSSVLAAAKCDSMTMTPGPWLGLPAVPAVTLYKHDPALTLVAGLISNKPTDKLRALPLWLSLQYLGLDGFVERIKHACQLSQWLQESLKKVNYIKILVEDELSSPVVVFRFFQELPGSDPVFKAVPVPNMTPSAVGRERHSCDALNLWLGEQLKQLVPASGLTVMDLEAEGTCLRFSPLMTAAGMIS.

Positions 12–40 (TLAEMGKNLKEAVKMLEDSQRRTEEENGK) form a coiled coil. Residues 28–44 (EDSQRRTEEENGKKLIS) are compositionally biased toward basic and acidic residues. A disordered region spans residues 28 to 47 (EDSQRRTEEENGKKLISRDI).

It belongs to the group II decarboxylase family. It depends on pyridoxal 5'-phosphate as a cofactor.

This is Putative pyridoxal-dependent decarboxylase domain-containing protein 2 (PDXDC2P) from Homo sapiens (Human).